The sequence spans 367 residues: Cytochrome P450 119 (367 aa).

Heme-binding residues include His76, Arg80, Thr257, Arg259, His315, and Cys317.

The protein belongs to the cytochrome P450 family. Heme serves as cofactor.

The protein resides in the cytoplasm. The chain is Cytochrome P450 119 (cyp119) from Sulfurisphaera tokodaii (strain DSM 16993 / JCM 10545 / NBRC 100140 / 7) (Sulfolobus tokodaii).